Consider the following 398-residue polypeptide: S-adenosylmethionine synthase (398 aa).

Histidine 17 lines the ATP pocket. Aspartate 19 is a binding site for Mg(2+). Glutamate 45 is a K(+) binding site. Residues glutamate 58 and glutamine 101 each contribute to the L-methionine site. Positions 101–111 (QSPDIAQGVDK) are flexible loop. ATP is bound by residues 176 to 178 (DGK), 243 to 244 (RF), aspartate 252, 258 to 259 (RK), and lysine 279. Aspartate 252 contacts L-methionine. Residue lysine 283 participates in L-methionine binding.

It belongs to the AdoMet synthase family. In terms of assembly, homotetramer; dimer of dimers. Mg(2+) serves as cofactor. The cofactor is K(+).

It localises to the cytoplasm. The enzyme catalyses L-methionine + ATP + H2O = S-adenosyl-L-methionine + phosphate + diphosphate. The protein operates within amino-acid biosynthesis; S-adenosyl-L-methionine biosynthesis; S-adenosyl-L-methionine from L-methionine: step 1/1. Functionally, catalyzes the formation of S-adenosylmethionine (AdoMet) from methionine and ATP. The overall synthetic reaction is composed of two sequential steps, AdoMet formation and the subsequent tripolyphosphate hydrolysis which occurs prior to release of AdoMet from the enzyme. The protein is S-adenosylmethionine synthase of Staphylococcus haemolyticus (strain JCSC1435).